The chain runs to 217 residues: Adenylate kinase (217 aa).

10-15 (GAGKGT) is an ATP binding site. Residues 30–59 (STGDLFRANISQQTELGKLAKSYMNAGNLV) form an NMP region. AMP-binding positions include Thr31, Arg36, 57-59 (NLV), 85-88 (GFPR), and Gln92. Residues 126–164 (GRRVCRNEPKHVFHVTYTPPKKEGVCDVCGGELYQRDDD) are LID. Residues Arg127 and 137 to 138 (VF) contribute to the ATP site. 2 residues coordinate AMP: Arg161 and Arg172. Gly200 lines the ATP pocket.

This sequence belongs to the adenylate kinase family. In terms of assembly, monomer.

The protein resides in the cytoplasm. The enzyme catalyses AMP + ATP = 2 ADP. Its pathway is purine metabolism; AMP biosynthesis via salvage pathway; AMP from ADP: step 1/1. Functionally, catalyzes the reversible transfer of the terminal phosphate group between ATP and AMP. Plays an important role in cellular energy homeostasis and in adenine nucleotide metabolism. This is Adenylate kinase from Streptomyces coelicolor (strain ATCC BAA-471 / A3(2) / M145).